The primary structure comprises 273 residues: Hemin import ATP-binding protein HmuV (273 aa).

The ABC transporter domain maps to Leu-2–Ala-256. Residue Gly-34–Ser-41 coordinates ATP.

This sequence belongs to the ABC transporter superfamily. Heme (hemin) importer (TC 3.A.1.14.5) family. As to quaternary structure, the complex is composed of two ATP-binding proteins (HmuV), two transmembrane proteins (HmuU) and a solute-binding protein (HmuT).

It is found in the cell inner membrane. Its function is as follows. Part of the ABC transporter complex HmuTUV involved in hemin import. Responsible for energy coupling to the transport system. This chain is Hemin import ATP-binding protein HmuV, found in Burkholderia ambifaria (strain ATCC BAA-244 / DSM 16087 / CCUG 44356 / LMG 19182 / AMMD) (Burkholderia cepacia (strain AMMD)).